Reading from the N-terminus, the 814-residue chain is Rap guanine nucleotide exchange factor 5 (814 aa).

One can recognise a DEP domain in the interval 43 to 118 (LQAADLVKDR…DNYVFYQFSS (76 aa)). An N-terminal Ras-GEF domain is found at 301–434 (ARYVVVSGTP…ELKEFQKILG (134 aa)). The Ras-GEF domain occupies 578–813 (NTWDLALELM…FELSHRLEPR (236 aa)).

It localises to the nucleus. Guanine nucleotide exchange factor (GEF) for RAP1A, RAP2A and MRAS/M-Ras-GTP. Its association with MRAS inhibits Rap1 activation. This Mus musculus (Mouse) protein is Rap guanine nucleotide exchange factor 5 (Rapgef5).